A 204-amino-acid chain; its full sequence is Somatotropin (204 aa).

Residues methionine 1–serine 17 form the signal peptide. At glutamine 18 the chain carries Pyrrolidone carboxylic acid. Disulfide bonds link cysteine 69-cysteine 177 and cysteine 194-cysteine 202.

It belongs to the somatotropin/prolactin family.

The protein resides in the secreted. Its function is as follows. Growth hormone plays an important role in growth control and is involved in the regulation of several anabolic processes. Implicated as an osmoregulatory substance important for seawater adaptation. This chain is Somatotropin (gh), found in Seriola quinqueradiata (Five-ray yellowtail).